A 176-amino-acid chain; its full sequence is Co-chaperone protein HscB homolog (176 aa).

The 73-residue stretch at 7–79 folds into the J domain; it reads THFSLFGLPE…LKRATYLLHL (73 aa).

It belongs to the HscB family. As to quaternary structure, interacts with HscA and stimulates its ATPase activity.

Functionally, co-chaperone involved in the maturation of iron-sulfur cluster-containing proteins. Seems to help targeting proteins to be folded toward HscA. The polypeptide is Co-chaperone protein HscB homolog (Ralstonia nicotianae (strain ATCC BAA-1114 / GMI1000) (Ralstonia solanacearum)).